Consider the following 543-residue polypeptide: Cytochrome P450 monooxygenase sphH (543 aa).

Helical transmembrane passes span 1-21 (MGPI…SVYF) and 32-52 (IATF…YQLF). Position 487 (cysteine 487) interacts with heme.

Belongs to the cytochrome P450 family. Heme serves as cofactor.

Its subcellular location is the membrane. It carries out the reaction presphingofungin + 2 reduced [NADPH--hemoprotein reductase] + O2 = sphingofungin B1 + 2 oxidized [NADPH--hemoprotein reductase] + H2O + 2 H(+). It functions in the pathway secondary metabolite biosynthesis. Its function is as follows. Cytochrome P450 monooxygenase; part of the gene cluster that mediates the biosynthesis of sphingofungins, bioactive molecules acting as sphingolipid inhibitors via inhibiting serine palmitoyl transferase (SPT). Within the pathway, sphH catalyzes the conversion of presphingofungin into sphingofungin B1 via hydroxylagtion at position C-14. Sphingofungin biosynthesis starts with the PKS sphB that produces an C18 polyketide precursor 3-hydroxyoctadeca-4,10-dienoyl-ACP containing one delta-6 desaturation and one delta-12 desaturation. The aminoacyl transferase sphA uses the sphB product to produce 3-keto-presphingofungin by adding an aminomalonate molecule. SphF then reduces the C-3 ketone of 3-keto-presphingofungin which leads to presphingofungin. The cytochrome P450 monooxygenase sphH converts presphingofungin into sphingofungin B1 which is further converted to sphingofungin B by the dioxygenase sphC. SphC is also able to convert presphingofungin into sphingofungin B2. The acetyltransferase sphE acetylates sphingofungin B to produce sphingofungin C, but can also convert sphingofungin B1 into sphingofungin C1 and sphingofungin B2 into sphingofungin C2. Finally, sphingofungin C can be spontaneously converted into sphingofungin D. The polypeptide is Cytochrome P450 monooxygenase sphH (Aspergillus fumigatus (strain CBS 144.89 / FGSC A1163 / CEA10) (Neosartorya fumigata)).